A 969-amino-acid polypeptide reads, in one-letter code: Protein translocase subunit SecA (969 aa).

ATP contacts are provided by residues Gln99, 117–121 (GEGKT), and Asp631.

This sequence belongs to the SecA family. Monomer and homodimer. Part of the essential Sec protein translocation apparatus which comprises SecA, SecYEG and auxiliary proteins SecDF. Other proteins may also be involved.

The protein localises to the cell inner membrane. It localises to the cytoplasm. The enzyme catalyses ATP + H2O + cellular proteinSide 1 = ADP + phosphate + cellular proteinSide 2.. Functionally, part of the Sec protein translocase complex. Interacts with the SecYEG preprotein conducting channel. Has a central role in coupling the hydrolysis of ATP to the transfer of proteins into and across the cell membrane, serving as an ATP-driven molecular motor driving the stepwise translocation of polypeptide chains across the membrane. This Chlamydia trachomatis serovar A (strain ATCC VR-571B / DSM 19440 / HAR-13) protein is Protein translocase subunit SecA.